Reading from the N-terminus, the 82-residue chain is DNA-directed RNA polymerase subunit omega (82 aa).

Belongs to the RNA polymerase subunit omega family. In cyanobacteria the RNAP catalytic core is composed of 2 alpha, 1 beta, 1 beta', 1 gamma and 1 omega subunit. When a sigma factor is associated with the core the holoenzyme is formed, which can initiate transcription.

It catalyses the reaction RNA(n) + a ribonucleoside 5'-triphosphate = RNA(n+1) + diphosphate. Functionally, promotes RNA polymerase assembly. Latches the N- and C-terminal regions of the beta' subunit thereby facilitating its interaction with the beta and alpha subunits. In Trichodesmium erythraeum (strain IMS101), this protein is DNA-directed RNA polymerase subunit omega.